Consider the following 283-residue polypeptide: Pantothenate synthetase (283 aa).

30-37 (MGYFHEGH) provides a ligand contact to ATP. Catalysis depends on histidine 37, which acts as the Proton donor. Residue glutamine 61 coordinates (R)-pantoate. Glutamine 61 serves as a coordination point for beta-alanine. Residue 147–150 (GEKD) participates in ATP binding. Glutamine 153 is a (R)-pantoate binding site. Residues valine 176 and 184–187 (MSSR) each bind ATP.

The protein belongs to the pantothenate synthetase family. In terms of assembly, homodimer.

It is found in the cytoplasm. The catalysed reaction is (R)-pantoate + beta-alanine + ATP = (R)-pantothenate + AMP + diphosphate + H(+). It functions in the pathway cofactor biosynthesis; (R)-pantothenate biosynthesis; (R)-pantothenate from (R)-pantoate and beta-alanine: step 1/1. Catalyzes the condensation of pantoate with beta-alanine in an ATP-dependent reaction via a pantoyl-adenylate intermediate. The sequence is that of Pantothenate synthetase from Syntrophobacter fumaroxidans (strain DSM 10017 / MPOB).